Here is a 306-residue protein sequence, read N- to C-terminus: ADP-polyphosphate phosphotransferase 2 (306 aa).

Belongs to the polyphosphate kinase 2 (PPK2) family. Class I subfamily.

It carries out the reaction [phosphate](n) + ATP = [phosphate](n+1) + ADP. The enzyme catalyses [phosphate](n) + GTP = [phosphate](n+1) + GDP. Its function is as follows. Uses inorganic polyphosphate (polyP) as a donor to convert ADP to ATP. Can also convert GDP to GTP, with lower efficiency. This chain is ADP-polyphosphate phosphotransferase 2, found in Rhizobium meliloti (strain 1021) (Ensifer meliloti).